The chain runs to 177 residues: MLNDASNKENANSDVAADAAARPEQTVLLGLDYGVKKMGMALGNTVTQDARPFDILAMNNGQPADWDNLLGIIDTWRIGRVVVGLPLNMDGSSSMIAKRAHKFARRLAHRLMEQRIHVPVQLFDERLTSVEAREMAWELGLIKNERDPIDDISACLLLQSYLANPDHAEDIATYKAD.

This sequence belongs to the YqgF nuclease family.

Its subcellular location is the cytoplasm. In terms of biological role, could be a nuclease involved in processing of the 5'-end of pre-16S rRNA. The polypeptide is Putative pre-16S rRNA nuclease (Psychrobacter sp. (strain PRwf-1)).